Consider the following 218-residue polypeptide: Ribose-5-phosphate isomerase A (218 aa).

Substrate contacts are provided by residues Thr-28–Thr-31, Asp-81–Asp-84, and Lys-94–Gly-97. Glu-103 functions as the Proton acceptor in the catalytic mechanism. Lys-121 contacts substrate.

The protein belongs to the ribose 5-phosphate isomerase family. In terms of assembly, homodimer.

The enzyme catalyses aldehydo-D-ribose 5-phosphate = D-ribulose 5-phosphate. It functions in the pathway carbohydrate degradation; pentose phosphate pathway; D-ribose 5-phosphate from D-ribulose 5-phosphate (non-oxidative stage): step 1/1. Its function is as follows. Catalyzes the reversible conversion of ribose-5-phosphate to ribulose 5-phosphate. This Pseudoalteromonas atlantica (strain T6c / ATCC BAA-1087) protein is Ribose-5-phosphate isomerase A.